A 196-amino-acid polypeptide reads, in one-letter code: Putative NADH dehydrogenase/NAD(P)H nitroreductase SCO5049 (196 aa).

It belongs to the nitroreductase family. HadB/RutE subfamily. The cofactor is FMN.

This Streptomyces coelicolor (strain ATCC BAA-471 / A3(2) / M145) protein is Putative NADH dehydrogenase/NAD(P)H nitroreductase SCO5049.